Consider the following 412-residue polypeptide: 43 kDa receptor-associated protein of the synapse (412 aa).

The N-myristoyl glycine moiety is linked to residue Gly-2. 7 TPR repeats span residues 6-39 (TKQQIEKGLQLYQSNQTEKALQVWTKVLEKSSDL), 83-116 (LESYLNLARSNEKLCEFHKTISYCKTCLGLPGTR), 123-156 (GQVSLSMGNAFLGLSVFQKALESFEKALRYAHNN), 163-196 (CRVCCSLGSFYAQVKDYEKALFFPCKAAELVNNY), 206-239 (AMSQYHMAVAYRLLGRLGSAMECCEESMKIALQH), 246-279 (ALCLLCFADIHRSRGDLETAFPRYDSAMSIMTEI), and 286-319 (VQALLGVAKCWVARKALDKALDAIERAQDLAEEV). Tyr-196 is modified (phosphotyrosine). The segment at 363–403 (CGLCGESIGEKNSRLQALPCSHIFHLRCLQNNGTRSCPNCR) adopts an RING-type zinc-finger fold. Ser-405 carries the phosphoserine modification.

The protein belongs to the RAPsyn family. Post-translationally, ubiquitinated by the BCR(KLHL8) complex, leading to its degradation.

The protein resides in the cell membrane. It localises to the postsynaptic cell membrane. Its subcellular location is the cytoplasm. It is found in the cytoskeleton. Postsynaptic protein required for clustering of nicotinic acetylcholine receptors (nAChRs) at the neuromuscular junction. It may link the receptor to the underlying postsynaptic cytoskeleton, possibly by direct association with actin or spectrin. In Homo sapiens (Human), this protein is 43 kDa receptor-associated protein of the synapse (RAPSN).